The following is a 284-amino-acid chain: ATP synthase gamma chain (284 aa).

Belongs to the ATPase gamma chain family. As to quaternary structure, F-type ATPases have 2 components, CF(1) - the catalytic core - and CF(0) - the membrane proton channel. CF(1) has five subunits: alpha(3), beta(3), gamma(1), delta(1), epsilon(1). CF(0) has three main subunits: a, b and c.

The protein localises to the cell membrane. Produces ATP from ADP in the presence of a proton gradient across the membrane. The gamma chain is believed to be important in regulating ATPase activity and the flow of protons through the CF(0) complex. This chain is ATP synthase gamma chain, found in Pelotomaculum thermopropionicum (strain DSM 13744 / JCM 10971 / SI).